The primary structure comprises 78 residues: Sec-independent protein translocase protein TatA (78 aa).

A helical membrane pass occupies residues 1–21; it reads MGGISIWQLLIIAVIVVLLFG. Basic and acidic residues predominate over residues 47–59; sequence ESEKKDADFEPKS. The tract at residues 47-78 is disordered; sequence ESEKKDADFEPKSLEQQSKQAATESKKDKEQA. Polar residues predominate over residues 60-69; it reads LEQQSKQAAT.

This sequence belongs to the TatA/E family. As to quaternary structure, the Tat system comprises two distinct complexes: a TatABC complex, containing multiple copies of TatA, TatB and TatC subunits, and a separate TatA complex, containing only TatA subunits. Substrates initially bind to the TatABC complex, which probably triggers association of the separate TatA complex to form the active translocon.

The protein resides in the cell inner membrane. Its function is as follows. Part of the twin-arginine translocation (Tat) system that transports large folded proteins containing a characteristic twin-arginine motif in their signal peptide across membranes. TatA could form the protein-conducting channel of the Tat system. The sequence is that of Sec-independent protein translocase protein TatA from Vibrio vulnificus (strain CMCP6).